Consider the following 79-residue polypeptide: Exodeoxyribonuclease 7 small subunit (79 aa).

It belongs to the XseB family. As to quaternary structure, heterooligomer composed of large and small subunits.

The protein localises to the cytoplasm. The catalysed reaction is Exonucleolytic cleavage in either 5'- to 3'- or 3'- to 5'-direction to yield nucleoside 5'-phosphates.. Functionally, bidirectionally degrades single-stranded DNA into large acid-insoluble oligonucleotides, which are then degraded further into small acid-soluble oligonucleotides. This Shouchella clausii (strain KSM-K16) (Alkalihalobacillus clausii) protein is Exodeoxyribonuclease 7 small subunit.